Reading from the N-terminus, the 802-residue chain is Putative flavin carrier protein 3 (802 aa).

An N-terminal signal peptide occupies residues 1-28; that stretch reads MRFLQVYKSSALIGLIILLASKVNLAEA. Over 29–169 the chain is Lumenal; sequence KRKLVATSLV…YFSNGKTVSQ (141 aa). Asn149 carries N-linked (GlcNAc...) asparagine glycosylation. The chain crosses the membrane as a helical span at residues 170–190; it reads IGVKWATAVVAGIGLLLSAIL. Over 191 to 200 the chain is Cytoplasmic; the sequence is STFGNSTAAS. A helical transmembrane segment spans residues 201-221; it reads HISANTMSLFLYFQSVVVVAM. At 222 to 229 the chain is on the lumenal side; sequence QHVHRVPP. Residues 230-250 traverse the membrane as a helical segment; it reads IAAAWAENLVWSMGLIRISFM. At 251 to 255 the chain is on the cytoplasmic side; sequence QRIFR. Residues 256-278 form a helical membrane-spanning segment; sequence WYVQSTGGTPSLYLTSTSMSVLA. At 279 to 323 the chain is on the lumenal side; it reads QRSWQYLMELPLIKRATNVLYGNANTLIFRGIKRLGYKMGIENTS. An N-linked (GlcNAc...) asparagine glycan is attached at Asn321. The chain crosses the membrane as a helical span at residues 324–344; the sequence is IVCTGFTFFVLCGYVLAGFII. Over 345–377 the chain is Cytoplasmic; that stretch reads VFKCCVELATRLGWIQKARFWEFRKQWRMILKG. A helical membrane pass occupies residues 378-398; it reads ALLRYIYIGFVQLTILSFWEF. Over 399-405 the chain is Lumenal; sequence TERDSPA. A helical transmembrane segment spans residues 406-426; it reads VIVIACLFILLSCGLMLWAAW. The Cytoplasmic segment spans residues 427-467; the sequence is RTVFFARRSVALYNNPAALLYGDEYVLHKYGFFYTMFNANH. A helical membrane pass occupies residues 468 to 488; it reads YWWNIVLLSYIFVKSLLVGFA. Topologically, residues 489 to 495 are lumenal; sequence QASGQTQ. A helical transmembrane segment spans residues 496–516; the sequence is VLFMFILDLFYFVAIIYYKPY. Topologically, residues 517–525 are cytoplasmic; sequence LDRPTNIMN. The helical transmembrane segment at 526–546 threads the bilayer; it reads ILIATVTVVNSFLFMFFSDLF. Asn547 carries N-linked (GlcNAc...) asparagine glycosylation. Topologically, residues 547-557 are lumenal; that stretch reads NQSYKVAAIMG. A helical membrane pass occupies residues 558–578; it reads WIFFIMNAAFSFILLMMILAF. Over 579-802 the chain is Cytoplasmic; it reads AGMMLFSKNP…PPGFFDEGFM (224 aa). Residues Ser616 and Ser635 each carry the phosphoserine modification. Residues 629-802 form a disordered region; that stretch reads KDHDDNSDYE…PPGFFDEGFM (174 aa). Composition is skewed to polar residues over residues 653–663, 697–717, and 761–788; these read DETTPTTVTSS, KQQT…STLG, and DTSS…NNKQ. Residues Ser779 and Ser782 each carry the phosphoserine modification.

This sequence belongs to the transient receptor potential (TRP) ion channel family.

The protein localises to the endoplasmic reticulum membrane. Functionally, may be responsible for the transport of FAD into the endoplasmic reticulum lumen, where it is required for oxidative protein folding. This is Putative flavin carrier protein 3 (FLC3) from Saccharomyces cerevisiae (strain ATCC 204508 / S288c) (Baker's yeast).